A 576-amino-acid chain; its full sequence is Keratin, type II cytoskeletal 5 (576 aa).

Residues 1–163 (MSRQSSVSFR…DPTIQRVRTE (163 aa)) form a head region. Phosphoserine is present on residues serine 5, serine 8, serine 16, and serine 21. Position 24 is a phosphothreonine; by CDK1 (threonine 24). Phosphoserine is present on residues serine 26, serine 36, serine 46, serine 60, serine 67, serine 71, serine 74, and serine 78. At threonine 147 the chain carries Phosphothreonine; by CDK1. The residue at position 162 (threonine 162) is a Phosphothreonine; by AURKB. A coil 1A region spans residues 164–199 (EREQIKTLNNKFASFIDKVRFLEQQNKVLDTKWTLL). The region spanning 164–477 (EREQIKTLNN…KLLEGEECRL (314 aa)) is the IF rod domain. The tract at residues 200 to 218 (QEQGTKTIKQNLDPLFEQY) is linker 1. The segment at 219–311 (INNLRRQLDG…FFDAELSQMQ (93 aa)) is coil 1B. The segment at 312–334 (THVSDTSVVLSMDNNRSLDLDSI) is linker 12. The segment at 335-473 (IAEVKAQYED…ATYRKLLEGE (139 aa)) is coil 2. The segment at 474–576 (ECRLSGEGVG…TSSSRRSFKS (103 aa)) is tail. The residue at position 527 (arginine 527) is an Omega-N-methylarginine. Residues 540-557 (GFSASSGQGGGFSSGGGS) show a composition bias toward gly residues. Residues 540–576 (GFSASSGQGGGFSSGGGSSSSVKFVSTTSSSRRSFKS) are disordered. The segment covering 558–576 (SSSVKFVSTTSSSRRSFKS) has biased composition (low complexity).

The protein belongs to the intermediate filament family. In terms of assembly, heterodimer of a type I and a type II keratin. Heterodimer with type I keratin KRT25 leading to the formation of keratin intermediate filament (KIF) network. Forms a heterodimer (via 2B domains) with KRT14 (via 2B domains). Interacts with TCHP. Interacts with EPPK1. Interacts with AMELX. Interacts with PKP1 (via N-terminus) and PKP2. Post-translationally, phosphorylated by CDK1, AURKB and Rho-kinase, phosphorylation is regulated by the cell cycle. Thr-24 phosphorylation, mediated by CDK1, peaks during prometaphase or metaphase cells with phosphorylated filamentous structures evident throughout the cytoplasm during early mitosis. CDK1 phosphorylates Thr-24 in mitotic cells at the site of injury. O-glycosylated. As to expression, expressed in the epidermis (at protein level) and testis (within pachytene spermatocytes).

The protein localises to the cytoplasm. Required for the formation of keratin intermediate filaments in the basal epidermis and maintenance of the skin barrier in response to mechanical stress. Regulates the recruitment of Langerhans cells to the epidermis, potentially by modulation of the abundance of macrophage chemotactic cytokines, macrophage inflammatory cytokines and CTNND1 localization in keratinocytes. This Rattus norvegicus (Rat) protein is Keratin, type II cytoskeletal 5.